We begin with the raw amino-acid sequence, 540 residues long: Alanine aminotransferase 2, mitochondrial (540 aa).

Residues 1–46 (MRRFLINQAKGLVDHSRRQHHHKSPSFLSPQPRPLASSPPALSRFF) constitute a mitochondrion transit peptide. Positions 11–40 (GLVDHSRRQHHHKSPSFLSPQPRPLASSPP) are disordered. Residues 28–40 (LSPQPRPLASSPP) show a composition bias toward low complexity. Residue K357 is modified to N6-(pyridoxal phosphate)lysine.

The protein belongs to the class-I pyridoxal-phosphate-dependent aminotransferase family. Alanine aminotransferase subfamily. In terms of assembly, homodimer. Pyridoxal 5'-phosphate serves as cofactor. The N-terminus is blocked. Expressed in shoots, essentially in leaves and flowers, mostly in vascular tissues. Also detected in stems and roots.

The protein resides in the mitochondrion. The catalysed reaction is L-alanine + 2-oxoglutarate = pyruvate + L-glutamate. It functions in the pathway photosynthesis; C4 acid pathway. The protein operates within amino-acid degradation; L-alanine degradation via transaminase pathway; pyruvate from L-alanine: step 1/1. This chain is Alanine aminotransferase 2, mitochondrial (ALAAT2), found in Arabidopsis thaliana (Mouse-ear cress).